A 626-amino-acid chain; its full sequence is Glucoamylase (626 aa).

The first 19 residues, 1–19, serve as a signal peptide directing secretion; that stretch reads MHLVSSLLVVGAAFQAVLG. The propeptide occupies 20–35; it reads LPDPLHEKRHSDIIKR. N-linked (GlcNAc...) asparagine glycosylation occurs at asparagine 106. Tryptophan 155 lines the substrate pocket. A glycan (N-linked (GlcNAc...) asparagine) is linked at asparagine 206. Aspartate 211 serves as the catalytic Proton acceptor. Residue glutamate 214 is the Proton donor of the active site. N-linked (GlcNAc...) asparagine glycosylation occurs at asparagine 217. The CBM20 domain maps to 520–626; that stretch reads CAADHEVLVT…STATLDDTWR (107 aa).

The protein belongs to the glycosyl hydrolase 15 family.

It carries out the reaction Hydrolysis of terminal (1-&gt;4)-linked alpha-D-glucose residues successively from non-reducing ends of the chains with release of beta-D-glucose.. The protein is Glucoamylase (gla-1) of Neurospora crassa (strain ATCC 24698 / 74-OR23-1A / CBS 708.71 / DSM 1257 / FGSC 987).